The following is a 179-amino-acid chain: Large ribosomal subunit protein uL5 (179 aa).

Belongs to the universal ribosomal protein uL5 family. In terms of assembly, part of the 50S ribosomal subunit; part of the 5S rRNA/L5/L18/L25 subcomplex. Contacts the 5S rRNA and the P site tRNA. Forms a bridge to the 30S subunit in the 70S ribosome.

This is one of the proteins that bind and probably mediate the attachment of the 5S RNA into the large ribosomal subunit, where it forms part of the central protuberance. In the 70S ribosome it contacts protein S13 of the 30S subunit (bridge B1b), connecting the 2 subunits; this bridge is implicated in subunit movement. Contacts the P site tRNA; the 5S rRNA and some of its associated proteins might help stabilize positioning of ribosome-bound tRNAs. The sequence is that of Large ribosomal subunit protein uL5 from Caldanaerobacter subterraneus subsp. tengcongensis (strain DSM 15242 / JCM 11007 / NBRC 100824 / MB4) (Thermoanaerobacter tengcongensis).